The primary structure comprises 219 residues: GTP-binding protein Rab-3D (219 aa).

An N-acetylalanine modification is found at alanine 2. A GDP-binding site is contributed by 29–37 (GNSSVGKTS). Residues serine 31, serine 32, valine 33, glycine 34, lysine 35, threonine 36, serine 37, proline 49, and serine 53 each contribute to the GTP site. Position 36 (threonine 36) interacts with Mg(2+). Positions 49–58 (PAFVSTVGID) match the Switch 1 motif. The Mg(2+) site is built by threonine 54 and aspartate 77. Glycine 80 serves as a coordination point for GTP. Residues 80 to 96 (GQERYRTITTAYYRGAM) carry the Switch 2 motif. At threonine 86 the chain carries Phosphothreonine. Residues asparagine 135, lysine 136, aspartate 138, alanine 166, and lysine 167 each coordinate GTP. GDP-binding positions include 135–138 (NKCD) and 165–167 (SAK). Residue serine 190 is modified to Phosphoserine. The segment at 190-219 (SLEPSSSPGSNGKGPALGDTPPPQPSSCGC) is disordered. A compositionally biased stretch (low complexity) spans 193 to 203 (PSSSPGSNGKG). The span at 209–219 (TPPPQPSSCGC) shows a compositional bias: pro residues. 2 S-geranylgeranyl cysteine lipidation sites follow: cysteine 217 and cysteine 219. Position 219 is a cysteine methyl ester; partial (cysteine 219).

Belongs to the small GTPase superfamily. Rab family. In terms of assembly, interacts with RIMS1, RIMS2, RPH3A and RPH3AL. Interacts with RAB3IP. The GTP-bound form interacts with REP15. Interacts with CHM; phosphorylation at Thr-86 disrupts this interaction. Interacts with MADD (via uDENN domain); the GTP-bound form is preferred for interaction. Mg(2+) serves as cofactor. In terms of processing, in fetal glands the majority of the proteins are methylated, whereas in neonatal and adult glands, only 50% are methylated. Phosphorylation of Thr-86 in the switch II region by LRRK2 prevents the association of RAB regulatory proteins, including CHM. In terms of tissue distribution, highest levels found in lung.

The protein resides in the cell membrane. It carries out the reaction GTP + H2O = GDP + phosphate + H(+). Regulated by guanine nucleotide exchange factors (GEFs) which promote the exchange of bound GDP for free GTP. Regulated by GTPase activating proteins (GAPs) which increase the GTP hydrolysis activity. Inhibited by GDP dissociation inhibitors (GDIs) which prevent Rab-GDP dissociation. The small GTPases Rab are key regulators of intracellular membrane trafficking, from the formation of transport vesicles to their fusion with membranes. Rabs cycle between an inactive GDP-bound form and an active GTP-bound form that is able to recruit to membranes different sets of downstream effectors directly responsible for vesicle formation, movement, tethering and fusion. RAB3D may be involved in the insulin-induced exocytosis of GLUT4-containing vesicles in adipocytes. This Rattus norvegicus (Rat) protein is GTP-binding protein Rab-3D.